A 518-amino-acid polypeptide reads, in one-letter code: Cytochrome P450 709B3 (518 aa).

A helical membrane pass occupies residues 3–23; it reads LISTINLLTIVLLLFVVSKIW. Residue Cys465 coordinates heme.

It belongs to the cytochrome P450 family. Heme is required as a cofactor. Highly expressed in rosette leaves and siliques, and at lower levels in flowers.

Its subcellular location is the membrane. In terms of biological role, plays a role in abscisic acid (ABA) and salt stress response. May regulate the salt stress response independently of well-characterized pathways. Does not function as cytokinin hydroxylase in yeast heterologous system. This is Cytochrome P450 709B3 from Arabidopsis thaliana (Mouse-ear cress).